Reading from the N-terminus, the 76-residue chain is Paralithocin 3 (76 aa).

The first 23 residues, 1–23 (MGPMKVLLVMLVVMVAAPHIADA), serve as a signal peptide directing secretion. 4 disulfides stabilise this stretch: Cys31/Cys62, Cys40/Cys58, Cys44/Cys56, and Cys49/Cys59. Pro74 carries the proline amide; partial modification.

This sequence belongs to the paralithocin family. Post-translationally, the amidated form is probably the active form.

Has antibacterial activity, mainly against marine Gram-positive bacteria like C.maltaromaticum (MIC=25 uM), C.mobile (MIC=12.5 uM), C.divergens (MIC=25 uM) and C.funditum (MIC=12.5 uM) but also against C.glutamicum (MIC=12.5 uM). Has very little or no activity against Gram-negative bacteria. The sequence is that of Paralithocin 3 from Paralithodes camtschaticus (Red king crab).